The primary structure comprises 492 residues: Glutamyl-tRNA(Gln) amidotransferase subunit B, mitochondrial (492 aa).

It belongs to the GatB/GatE family. GatB subfamily. As to quaternary structure, subunit of the heterotrimeric GatFAB amidotransferase (AdT) complex, composed of A, B and F subunits.

It is found in the mitochondrion. The enzyme catalyses L-glutamyl-tRNA(Gln) + L-glutamine + ATP + H2O = L-glutaminyl-tRNA(Gln) + L-glutamate + ADP + phosphate + H(+). Its function is as follows. Allows the formation of correctly charged Gln-tRNA(Gln) through the transamidation of misacylated Glu-tRNA(Gln) in the mitochondria. The reaction takes place in the presence of glutamine and ATP through an activated gamma-phospho-Glu-tRNA(Gln). The chain is Glutamyl-tRNA(Gln) amidotransferase subunit B, mitochondrial from Komagataella phaffii (strain GS115 / ATCC 20864) (Yeast).